The sequence spans 299 residues: 4-hydroxy-3-methylbut-2-enyl diphosphate reductase (299 aa).

Position 12 (C12) interacts with [4Fe-4S] cluster. Residues H42 and H88 each contribute to the (2E)-4-hydroxy-3-methylbut-2-enyl diphosphate site. Dimethylallyl diphosphate contacts are provided by H42 and H88. Residues H42 and H88 each contribute to the isopentenyl diphosphate site. Residue C110 participates in [4Fe-4S] cluster binding. H138 contributes to the (2E)-4-hydroxy-3-methylbut-2-enyl diphosphate binding site. A dimethylallyl diphosphate-binding site is contributed by H138. H138 contacts isopentenyl diphosphate. E140 serves as the catalytic Proton donor. T177 contributes to the (2E)-4-hydroxy-3-methylbut-2-enyl diphosphate binding site. A [4Fe-4S] cluster-binding site is contributed by C205. (2E)-4-hydroxy-3-methylbut-2-enyl diphosphate is bound by residues S233, N235, and S277. S233, N235, and S277 together coordinate dimethylallyl diphosphate. Residues S233, N235, and S277 each contribute to the isopentenyl diphosphate site.

Belongs to the IspH family. The cofactor is [4Fe-4S] cluster.

The catalysed reaction is isopentenyl diphosphate + 2 oxidized [2Fe-2S]-[ferredoxin] + H2O = (2E)-4-hydroxy-3-methylbut-2-enyl diphosphate + 2 reduced [2Fe-2S]-[ferredoxin] + 2 H(+). The enzyme catalyses dimethylallyl diphosphate + 2 oxidized [2Fe-2S]-[ferredoxin] + H2O = (2E)-4-hydroxy-3-methylbut-2-enyl diphosphate + 2 reduced [2Fe-2S]-[ferredoxin] + 2 H(+). Its pathway is isoprenoid biosynthesis; dimethylallyl diphosphate biosynthesis; dimethylallyl diphosphate from (2E)-4-hydroxy-3-methylbutenyl diphosphate: step 1/1. It participates in isoprenoid biosynthesis; isopentenyl diphosphate biosynthesis via DXP pathway; isopentenyl diphosphate from 1-deoxy-D-xylulose 5-phosphate: step 6/6. Catalyzes the conversion of 1-hydroxy-2-methyl-2-(E)-butenyl 4-diphosphate (HMBPP) into a mixture of isopentenyl diphosphate (IPP) and dimethylallyl diphosphate (DMAPP). Acts in the terminal step of the DOXP/MEP pathway for isoprenoid precursor biosynthesis. This Malacoplasma penetrans (strain HF-2) (Mycoplasma penetrans) protein is 4-hydroxy-3-methylbut-2-enyl diphosphate reductase.